The primary structure comprises 357 residues: O-methyltransferase 9 (357 aa).

S-adenosyl-L-methionine contacts are provided by glycine 200, aspartate 224, asparagine 249, phenylalanine 250, and lysine 263. Catalysis depends on histidine 267, which acts as the Proton acceptor.

This sequence belongs to the class I-like SAM-binding methyltransferase superfamily. Cation-independent O-methyltransferase family. COMT subfamily.

It carries out the reaction (3,5-dichloro-2,4,6-trihydroxyphenyl)hexan-1-one + S-adenosyl-L-methionine = 1-(3,5-dichloro-2,6-dihydroxy-4-methoxyphenyl)hexan-1-one + S-adenosyl-L-homocysteine + H(+). This chain is O-methyltransferase 9 (omt9), found in Dictyostelium discoideum (Social amoeba).